The following is a 52-amino-acid chain: Large ribosomal subunit protein eL40 (52 aa).

Belongs to the eukaryotic ribosomal protein eL40 family.

The chain is Large ribosomal subunit protein eL40 from Thermococcus onnurineus (strain NA1).